A 386-amino-acid polypeptide reads, in one-letter code: Flap endonuclease 1 (386 aa).

An N-domain region spans residues 1–104 (MGILGLSKLI…GELAKRAERR (104 aa)). Aspartate 34 serves as a coordination point for Mg(2+). DNA contacts are provided by arginine 47 and arginine 70. The Mg(2+) site is built by aspartate 86, glutamate 158, glutamate 160, aspartate 179, and aspartate 181. Positions 122-253 (EIEKFNRRLV…KRAIELINNY (132 aa)) are I-domain. Glutamate 158 is a DNA binding site. Glycine 231 and aspartate 233 together coordinate DNA. Aspartate 233 serves as a coordination point for Mg(2+). The interaction with PCNA stretch occupies residues 336–344 (TQVRLDSFF). The tract at residues 354–386 (VNAAKRKAEEAKKSANNKKAKTSGGAARGRRPK) is disordered.

This sequence belongs to the XPG/RAD2 endonuclease family. FEN1 subfamily. As to quaternary structure, interacts with PCNA. Three molecules of FEN1 bind to one PCNA trimer with each molecule binding to one PCNA monomer. PCNA stimulates the nuclease activity without altering cleavage specificity. Requires Mg(2+) as cofactor. Post-translationally, phosphorylated. Phosphorylation upon DNA damage induces relocalization to the nuclear plasma.

It localises to the nucleus. It is found in the nucleolus. The protein resides in the nucleoplasm. The protein localises to the mitochondrion. In terms of biological role, structure-specific nuclease with 5'-flap endonuclease and 5'-3' exonuclease activities involved in DNA replication and repair. During DNA replication, cleaves the 5'-overhanging flap structure that is generated by displacement synthesis when DNA polymerase encounters the 5'-end of a downstream Okazaki fragment. It enters the flap from the 5'-end and then tracks to cleave the flap base, leaving a nick for ligation. Also involved in the long patch base excision repair (LP-BER) pathway, by cleaving within the apurinic/apyrimidinic (AP) site-terminated flap. Acts as a genome stabilization factor that prevents flaps from equilibrating into structures that lead to duplications and deletions. Also possesses 5'-3' exonuclease activity on nicked or gapped double-stranded DNA, and exhibits RNase H activity. Also involved in replication and repair of rDNA and in repairing mitochondrial DNA. This Drosophila pseudoobscura pseudoobscura (Fruit fly) protein is Flap endonuclease 1.